The chain runs to 388 residues: Mannitol-1-phosphate 5-dehydrogenase (388 aa).

5–16 (AIQFGGGNIGRG) contacts NAD(+). Lys213 is a catalytic residue.

The protein belongs to the mannitol dehydrogenase family. Monomer.

The enzyme catalyses D-mannitol 1-phosphate + NAD(+) = beta-D-fructose 6-phosphate + NADH + H(+). Catalyzes the NAD(H)-dependent interconversion of D-fructose 6-phosphate and D-mannitol 1-phosphate in the mannitol metabolic pathway. The chain is Mannitol-1-phosphate 5-dehydrogenase (mpdA) from Neosartorya fischeri (strain ATCC 1020 / DSM 3700 / CBS 544.65 / FGSC A1164 / JCM 1740 / NRRL 181 / WB 181) (Aspergillus fischerianus).